The chain runs to 276 residues: Protein MGF 360-15R (276 aa).

The protein belongs to the asfivirus MGF 360 family.

In terms of biological role, plays a role in virus cell tropism, and may be required for efficient virus replication in macrophages. This is Protein MGF 360-15R from African swine fever virus (isolate Warthog/Namibia/Wart80/1980) (ASFV).